Here is an 83-residue protein sequence, read N- to C-terminus: MVVIRLSRGGAKGRPFFNIVVADKRVRRDGRFIERLGFYNPTAKENEEGLRIMQDRLTYWKSVGAQSSPTVERLVKQAAKQMA.

The protein belongs to the bacterial ribosomal protein bS16 family.

The chain is Small ribosomal subunit protein bS16 from Verminephrobacter eiseniae (strain EF01-2).